The primary structure comprises 572 residues: NADP-dependent malic enzyme (572 aa).

Met-1 is modified (N-acetylmethionine). The Proton donor role is filled by Tyr-102. Arg-155 serves as a coordination point for NADP(+). Lys-173 functions as the Proton acceptor in the catalytic mechanism. Glu-245, Asp-246, and Asp-269 together coordinate a divalent metal cation. Residues Asp-269 and 301–318 (GAGE…MAME) contribute to the NADP(+) site. Ser-336 is modified (phosphoserine).

This sequence belongs to the malic enzymes family. As to quaternary structure, homotetramer. It depends on Mg(2+) as a cofactor. Mn(2+) is required as a cofactor.

The protein localises to the cytoplasm. It carries out the reaction (S)-malate + NADP(+) = pyruvate + CO2 + NADPH. It catalyses the reaction oxaloacetate + H(+) = pyruvate + CO2. In terms of biological role, catalyzes the oxidative decarboxylation of (S)-malate in the presence of NADP(+) and divalent metal ions, and decarboxylation of oxaloacetate. This Mus musculus (Mouse) protein is NADP-dependent malic enzyme (Me1).